A 233-amino-acid chain; its full sequence is Phosphoglycolate phosphatase (233 aa).

Catalysis depends on Asp-9, which acts as the Nucleophile. Mg(2+) contacts are provided by Asp-9 and Asp-11. Substrate is bound at residue Lys-154. Mg(2+)-binding residues include Asp-177 and Asp-181.

This sequence belongs to the archaeal SPP-like hydrolase family. It depends on Mg(2+) as a cofactor.

It catalyses the reaction 2-phosphoglycolate + H2O = glycolate + phosphate. In terms of biological role, catalyzes the dephosphorylation of 2-phosphoglycolate. This chain is Phosphoglycolate phosphatase, found in Pyrococcus abyssi (strain GE5 / Orsay).